Reading from the N-terminus, the 204-residue chain is Large ribosomal subunit protein uL4 (204 aa).

Residues 49–75 (TKGRSDVSGGGKKPWRQKGRGGARAGS) form a disordered region.

This sequence belongs to the universal ribosomal protein uL4 family. In terms of assembly, part of the 50S ribosomal subunit.

Functionally, one of the primary rRNA binding proteins, this protein initially binds near the 5'-end of the 23S rRNA. It is important during the early stages of 50S assembly. It makes multiple contacts with different domains of the 23S rRNA in the assembled 50S subunit and ribosome. In terms of biological role, forms part of the polypeptide exit tunnel. This Campylobacter jejuni subsp. jejuni serotype O:23/36 (strain 81-176) protein is Large ribosomal subunit protein uL4.